Consider the following 425-residue polypeptide: Serine--tRNA ligase (425 aa).

L-serine is bound at residue 229 to 231 (TSE). ATP is bound by residues 259–261 (RKE) and V275. E282 lines the L-serine pocket. ATP is bound at residue 349 to 352 (EITS). T384 is a binding site for L-serine.

Belongs to the class-II aminoacyl-tRNA synthetase family. Type-1 seryl-tRNA synthetase subfamily. Homodimer. The tRNA molecule binds across the dimer.

It localises to the cytoplasm. It catalyses the reaction tRNA(Ser) + L-serine + ATP = L-seryl-tRNA(Ser) + AMP + diphosphate + H(+). The enzyme catalyses tRNA(Sec) + L-serine + ATP = L-seryl-tRNA(Sec) + AMP + diphosphate + H(+). It participates in aminoacyl-tRNA biosynthesis; selenocysteinyl-tRNA(Sec) biosynthesis; L-seryl-tRNA(Sec) from L-serine and tRNA(Sec): step 1/1. Its function is as follows. Catalyzes the attachment of serine to tRNA(Ser). Is also able to aminoacylate tRNA(Sec) with serine, to form the misacylated tRNA L-seryl-tRNA(Sec), which will be further converted into selenocysteinyl-tRNA(Sec). This is Serine--tRNA ligase from Borreliella afzelii (strain PKo) (Borrelia afzelii).